Here is a 138-residue protein sequence, read N- to C-terminus: Large ribosomal subunit protein uL16 (138 aa).

Residues 1–13 (MLQPARRKYRKEQ) show a composition bias toward basic residues. Residues 1-22 (MLQPARRKYRKEQKGRNTGIAT) are disordered.

Belongs to the universal ribosomal protein uL16 family. Part of the 50S ribosomal subunit.

Its function is as follows. Binds 23S rRNA and is also seen to make contacts with the A and possibly P site tRNAs. In Delftia acidovorans (strain DSM 14801 / SPH-1), this protein is Large ribosomal subunit protein uL16.